We begin with the raw amino-acid sequence, 237 residues long: Concanavalin-A (237 aa).

Mn(2+)-binding residues include glutamate 8 and aspartate 10. Residues aspartate 10, tyrosine 12, asparagine 14, and aspartate 19 each contribute to the Ca(2+) site. Tyrosine 12 contributes to the a carbohydrate binding site. Residues aspartate 19 and histidine 24 each contribute to the Mn(2+) site. 99 to 100 (LY) provides a ligand contact to a carbohydrate. Residue aspartate 208 participates in Ca(2+) binding. An a carbohydrate-binding site is contributed by arginine 228.

The protein belongs to the leguminous lectin family. Homotetramer.

In terms of biological role, glucose/D-mannose specific lectin. The polypeptide is Concanavalin-A (Canavalia lineata (Beach bean)).